The following is a 515-amino-acid chain: Bifunctional purine biosynthesis protein PurH (515 aa).

Positions 1 to 145 (MTKRALISVS…KNHASVTVVV (145 aa)) constitute an MGS-like domain.

It belongs to the PurH family.

The catalysed reaction is (6R)-10-formyltetrahydrofolate + 5-amino-1-(5-phospho-beta-D-ribosyl)imidazole-4-carboxamide = 5-formamido-1-(5-phospho-D-ribosyl)imidazole-4-carboxamide + (6S)-5,6,7,8-tetrahydrofolate. It carries out the reaction IMP + H2O = 5-formamido-1-(5-phospho-D-ribosyl)imidazole-4-carboxamide. It participates in purine metabolism; IMP biosynthesis via de novo pathway; 5-formamido-1-(5-phospho-D-ribosyl)imidazole-4-carboxamide from 5-amino-1-(5-phospho-D-ribosyl)imidazole-4-carboxamide (10-formyl THF route): step 1/1. Its pathway is purine metabolism; IMP biosynthesis via de novo pathway; IMP from 5-formamido-1-(5-phospho-D-ribosyl)imidazole-4-carboxamide: step 1/1. This Streptococcus pyogenes serotype M3 (strain ATCC BAA-595 / MGAS315) protein is Bifunctional purine biosynthesis protein PurH.